A 61-amino-acid chain; its full sequence is Short neurotoxin 1 (61 aa).

Polar residues predominate over residues 1 to 16 (MECHNQQSSQPPTTKT). A disordered region spans residues 1–20 (MECHNQQSSQPPTTKTCPGE). Cystine bridges form between Cys3–Cys23, Cys17–Cys40, Cys42–Cys53, and Cys54–Cys59.

This sequence belongs to the three-finger toxin family. Short-chain subfamily. Type I alpha-neurotoxin sub-subfamily. Expressed by the venom gland.

The protein resides in the secreted. Binds to muscle nicotinic acetylcholine receptor (nAChR) and inhibit acetylcholine from binding to the receptor, thereby impairing neuromuscular transmission. The sequence is that of Short neurotoxin 1 from Naja melanoleuca (Forest cobra).